The following is a 170-amino-acid chain: Macro domain-containing protein DR_2288 (170 aa).

Positions 1 to 170 (MPLELVQGDI…HVFERALAQL (170 aa)) constitute a Macro domain.

The protein belongs to the MacroD-type family.

The chain is Macro domain-containing protein DR_2288 from Deinococcus radiodurans (strain ATCC 13939 / DSM 20539 / JCM 16871 / CCUG 27074 / LMG 4051 / NBRC 15346 / NCIMB 9279 / VKM B-1422 / R1).